We begin with the raw amino-acid sequence, 408 residues long: Tryptophan synthase beta chain (408 aa).

An N6-(pyridoxal phosphate)lysine modification is found at Lys-90.

Belongs to the TrpB family. In terms of assembly, tetramer of two alpha and two beta chains. Pyridoxal 5'-phosphate is required as a cofactor.

The catalysed reaction is (1S,2R)-1-C-(indol-3-yl)glycerol 3-phosphate + L-serine = D-glyceraldehyde 3-phosphate + L-tryptophan + H2O. Its pathway is amino-acid biosynthesis; L-tryptophan biosynthesis; L-tryptophan from chorismate: step 5/5. The beta subunit is responsible for the synthesis of L-tryptophan from indole and L-serine. The chain is Tryptophan synthase beta chain from Bacillus licheniformis (strain ATCC 14580 / DSM 13 / JCM 2505 / CCUG 7422 / NBRC 12200 / NCIMB 9375 / NCTC 10341 / NRRL NRS-1264 / Gibson 46).